The primary structure comprises 98 residues: Hainantoxin-XVII.3 (98 aa).

A signal peptide spans M1–A40. The propeptide occupies Q41–R64. 3 disulfides stabilise this stretch: C66–C81, C73–C85, and C80–C95.

Belongs to the hainantoxin family. 17 subfamily. Expressed by the venom gland.

The protein localises to the secreted. Functionally, inhibits with low potency Kv1.2/KCNA2 and Kv1.3/KCNA3 voltage-gated potassium channels. This chain is Hainantoxin-XVII.3, found in Cyriopagopus hainanus (Chinese bird spider).